The chain runs to 646 residues: uncharacterized protein (646 aa).

10 helical membrane-spanning segments follow: residues 20-40 (AYFLSCVFAVSVFFVFTSFIF), 54-74 (LVKTCLSAALVVIIVFCIFFI), 115-135 (LAAIAAGIGAGLLFSKLFFMI), 154-174 (AFVMTIAGFLILFQTLLILSL), 203-223 (TVLSLLCLGSGYYLSATANAI), 232-252 (ILILVLIGTYFFFTQSSVAFF), 285-305 (LFLTSVITAVILTATGVIYMF), 523-543 (GVALMLFIGLFVSVLFFIVQG), 582-602 (IGFLFFIPFIAGTIHAGFAYA), and 613-633 (FLEAVIVIFIYFVFQALYYIV).

It belongs to the ABC-4 integral membrane protein family.

Its subcellular location is the cell membrane. This is an uncharacterized protein from Bacillus subtilis (strain 168).